Reading from the N-terminus, the 213-residue chain is Sclerostin (213 aa).

Residues 1–28 (MQLSLAPCLACLLVHAAFVAVESQGWQA) form the signal peptide. N53 carries N-linked (GlcNAc...) asparagine glycosylation. Cystine bridges form between C80-C134, C94-C148, C105-C165, and C109-C167. The region spanning 82–172 (ELHYTRFVTD…ASCKCKRLTR (91 aa)) is the CTCK domain. The N-linked (GlcNAc...) asparagine glycan is linked to N175. Residues 178–213 (ELKDFGPETARPQKGRKPRPRARGAKANQAELENAY) form a disordered region. The segment covering 190–201 (QKGRKPRPRARG) has biased composition (basic residues).

Belongs to the sclerostin family. In terms of assembly, interacts with LRP4 (via the extracellular domain); the interaction facilitates the inhibition of Wnt signaling. Interacts with LRP5 (via the first two YWTD-EGF repeat domains); the interaction inhibits Wnt-mediated signaling. Interacts with LRP6.

Its subcellular location is the secreted. Its function is as follows. Negative regulator of bone growth that acts through inhibition of Wnt signaling and bone formation. This is Sclerostin from Rattus norvegicus (Rat).